The primary structure comprises 217 residues: Pyridoxine/pyridoxamine 5'-phosphate oxidase (217 aa).

FMN contacts are provided by residues 66–71 (RMVLLK), 81–82 (FT), Arg87, Lys88, and Gln110. Substrate is bound at residue Lys71. Substrate is bound by residues Tyr128, Arg132, and Ser136. FMN-binding positions include 145–146 (QS) and Trp190. A substrate-binding site is contributed by 196-198 (RLH). Arg200 serves as a coordination point for FMN.

Belongs to the pyridoxamine 5'-phosphate oxidase family. In terms of assembly, homodimer. It depends on FMN as a cofactor.

The catalysed reaction is pyridoxamine 5'-phosphate + O2 + H2O = pyridoxal 5'-phosphate + H2O2 + NH4(+). It carries out the reaction pyridoxine 5'-phosphate + O2 = pyridoxal 5'-phosphate + H2O2. It participates in cofactor metabolism; pyridoxal 5'-phosphate salvage; pyridoxal 5'-phosphate from pyridoxamine 5'-phosphate: step 1/1. It functions in the pathway cofactor metabolism; pyridoxal 5'-phosphate salvage; pyridoxal 5'-phosphate from pyridoxine 5'-phosphate: step 1/1. In terms of biological role, catalyzes the oxidation of either pyridoxine 5'-phosphate (PNP) or pyridoxamine 5'-phosphate (PMP) into pyridoxal 5'-phosphate (PLP). This is Pyridoxine/pyridoxamine 5'-phosphate oxidase from Colwellia psychrerythraea (strain 34H / ATCC BAA-681) (Vibrio psychroerythus).